The primary structure comprises 106 residues: Cyclin-dependent protein kinase inhibitor SMR15 (106 aa).

Its function is as follows. Probable cyclin-dependent protein kinase (CDK) inhibitor that functions as a repressor of mitosis in the endoreduplication cell cycle. The chain is Cyclin-dependent protein kinase inhibitor SMR15 from Arabidopsis thaliana (Mouse-ear cress).